Consider the following 96-residue polypeptide: uncharacterized protein (96 aa).

A helical transmembrane segment spans residues 1–21 (MSDFEIIVGISSLLQVIILNI).

It localises to the membrane. This is an uncharacterized protein from Saccharomyces cerevisiae (strain ATCC 204508 / S288c) (Baker's yeast).